The following is an 874-amino-acid chain: Alanine--tRNA ligase (874 aa).

Positions 564, 568, 665, and 669 each coordinate Zn(2+).

Belongs to the class-II aminoacyl-tRNA synthetase family. Zn(2+) serves as cofactor.

Its subcellular location is the cytoplasm. It catalyses the reaction tRNA(Ala) + L-alanine + ATP = L-alanyl-tRNA(Ala) + AMP + diphosphate. In terms of biological role, catalyzes the attachment of alanine to tRNA(Ala) in a two-step reaction: alanine is first activated by ATP to form Ala-AMP and then transferred to the acceptor end of tRNA(Ala). Also edits incorrectly charged Ser-tRNA(Ala) and Gly-tRNA(Ala) via its editing domain. This Burkholderia vietnamiensis (strain G4 / LMG 22486) (Burkholderia cepacia (strain R1808)) protein is Alanine--tRNA ligase.